A 203-amino-acid chain; its full sequence is ATP-dependent Clp protease proteolytic subunit 2 (203 aa).

S100 serves as the catalytic Nucleophile. Residue H125 is part of the active site.

Belongs to the peptidase S14 family. As to quaternary structure, fourteen ClpP subunits assemble into 2 heptameric rings which stack back to back to give a disk-like structure with a central cavity, resembling the structure of eukaryotic proteasomes.

It localises to the cytoplasm. It carries out the reaction Hydrolysis of proteins to small peptides in the presence of ATP and magnesium. alpha-casein is the usual test substrate. In the absence of ATP, only oligopeptides shorter than five residues are hydrolyzed (such as succinyl-Leu-Tyr-|-NHMec, and Leu-Tyr-Leu-|-Tyr-Trp, in which cleavage of the -Tyr-|-Leu- and -Tyr-|-Trp bonds also occurs).. Its function is as follows. Cleaves peptides in various proteins in a process that requires ATP hydrolysis. Has a chymotrypsin-like activity. Plays a major role in the degradation of misfolded proteins. This Thermobifida fusca (strain YX) protein is ATP-dependent Clp protease proteolytic subunit 2.